Here is a 462-residue protein sequence, read N- to C-terminus: Putative zinc metalloprotease RSc1411 (462 aa).

Residues 1–21 (MLTVLAFVFAIAVLIVVHELG) traverse the membrane as a helical segment. His18 lines the Zn(2+) pocket. Glu19 is a catalytic residue. A Zn(2+)-binding site is contributed by His22. The helical transmembrane segment at 102–124 (FAIVAAGPVFNFLLAIALYALLA) threads the bilayer. The PDZ domain maps to 201–283 (TVRLRELPSA…MPEQNASIDI (83 aa)). Transmembrane regions (helical) follow at residues 386-406 (FVAF…LPVP) and 430-450 (WQAV…SLAL).

It belongs to the peptidase M50B family. Requires Zn(2+) as cofactor.

Its subcellular location is the cell inner membrane. The chain is Putative zinc metalloprotease RSc1411 from Ralstonia nicotianae (strain ATCC BAA-1114 / GMI1000) (Ralstonia solanacearum).